Reading from the N-terminus, the 98-residue chain is NADH-ubiquinone oxidoreductase chain 4L (98 aa).

A run of 3 helical transmembrane segments spans residues 2–22 (PSTFFNLTMAFSLSLLGTLMF), 26–46 (LMSTLLCLEGMVLSLFIMTSV), and 58–79 (PIPITILVFAACEAAVGLALLV).

It belongs to the complex I subunit 4L family. Core subunit of respiratory chain NADH dehydrogenase (Complex I) which is composed of 45 different subunits.

The protein localises to the mitochondrion inner membrane. The catalysed reaction is a ubiquinone + NADH + 5 H(+)(in) = a ubiquinol + NAD(+) + 4 H(+)(out). Its function is as follows. Core subunit of the mitochondrial membrane respiratory chain NADH dehydrogenase (Complex I) which catalyzes electron transfer from NADH through the respiratory chain, using ubiquinone as an electron acceptor. Part of the enzyme membrane arm which is embedded in the lipid bilayer and involved in proton translocation. The protein is NADH-ubiquinone oxidoreductase chain 4L of Mus musculus (Mouse).